A 269-amino-acid polypeptide reads, in one-letter code: Putative phosphoenolpyruvate synthase regulatory protein (269 aa).

Gly-149–Thr-156 contributes to the ADP binding site.

Belongs to the pyruvate, phosphate/water dikinase regulatory protein family. PSRP subfamily.

The catalysed reaction is [pyruvate, water dikinase] + ADP = [pyruvate, water dikinase]-phosphate + AMP + H(+). The enzyme catalyses [pyruvate, water dikinase]-phosphate + phosphate + H(+) = [pyruvate, water dikinase] + diphosphate. Its function is as follows. Bifunctional serine/threonine kinase and phosphorylase involved in the regulation of the phosphoenolpyruvate synthase (PEPS) by catalyzing its phosphorylation/dephosphorylation. The sequence is that of Putative phosphoenolpyruvate synthase regulatory protein from Pseudoalteromonas translucida (strain TAC 125).